Reading from the N-terminus, the 207-residue chain is Ribonuclease HII (207 aa).

In terms of domain architecture, RNase H type-2 spans H19–E207. Residues D25, E26, and D117 each contribute to the a divalent metal cation site.

The protein belongs to the RNase HII family. The cofactor is Mn(2+). Mg(2+) is required as a cofactor.

It localises to the cytoplasm. It carries out the reaction Endonucleolytic cleavage to 5'-phosphomonoester.. Functionally, endonuclease that specifically degrades the RNA of RNA-DNA hybrids. The polypeptide is Ribonuclease HII (Vibrio vulnificus (strain CMCP6)).